The primary structure comprises 383 residues: S-adenosylmethionine synthase (383 aa).

ATP is bound at residue histidine 15. Aspartate 17 serves as a coordination point for Mg(2+). Glutamate 43 provides a ligand contact to K(+). 2 residues coordinate L-methionine: glutamate 56 and glutamine 99. Residues 99-109 are flexible loop; that stretch reads QSPDINQGVDR. ATP contacts are provided by residues 164–166, 230–231, aspartate 239, 245–246, alanine 262, and lysine 266; these read DAK, RF, and RK. Aspartate 239 serves as a coordination point for L-methionine. Lysine 270 is an L-methionine binding site.

It belongs to the AdoMet synthase family. In terms of assembly, homotetramer; dimer of dimers. The cofactor is Mg(2+). K(+) serves as cofactor.

The protein localises to the cytoplasm. The enzyme catalyses L-methionine + ATP + H2O = S-adenosyl-L-methionine + phosphate + diphosphate. It functions in the pathway amino-acid biosynthesis; S-adenosyl-L-methionine biosynthesis; S-adenosyl-L-methionine from L-methionine: step 1/1. In terms of biological role, catalyzes the formation of S-adenosylmethionine (AdoMet) from methionine and ATP. The overall synthetic reaction is composed of two sequential steps, AdoMet formation and the subsequent tripolyphosphate hydrolysis which occurs prior to release of AdoMet from the enzyme. The protein is S-adenosylmethionine synthase of Actinobacillus pleuropneumoniae serotype 7 (strain AP76).